The sequence spans 286 residues: MEIKSDGTYVDLTLGRAGHSLEILKKLINGRLICFDKDNEAIKESYKKLQKISPNFTLIQNDFRFLKAELEKLGINEVDGILADLGVSSPQIDDPTRGFSYSQEGPLDMRMNQQNSFSAKDIIDNFDESELTKILIKNADVKLANLVAKAIVAKRPIKSTSELVEIIKNALPAKIVREKNPAKAVFQALRIEVNDELGALTAMLADATQLLKKDGKILIITFHSKEDSIVKNFFQKQNYVDPRLNKLPINIQKIWKQKIIFPSEDEKLQNNRSRSAKLRVVKKLSI.

S-adenosyl-L-methionine is bound by residues 17–19 (AGH), D36, F63, D84, and Q91.

Belongs to the methyltransferase superfamily. RsmH family.

The protein resides in the cytoplasm. It catalyses the reaction cytidine(1402) in 16S rRNA + S-adenosyl-L-methionine = N(4)-methylcytidine(1402) in 16S rRNA + S-adenosyl-L-homocysteine + H(+). Its function is as follows. Specifically methylates the N4 position of cytidine in position 1402 (C1402) of 16S rRNA. In Metamycoplasma arthritidis (strain 158L3-1) (Mycoplasma arthritidis), this protein is Ribosomal RNA small subunit methyltransferase H.